A 786-amino-acid polypeptide reads, in one-letter code: Tyrosine-protein kinase Btk (786 aa).

The interval 1-23 (MMGTKHRNSHVNGSIKSSSSLRS) is disordered. The span at 14 to 23 (SIKSSSSLRS) shows a compositional bias: low complexity. Residues 41 to 184 (DVVKSGSMVK…WIRAIRQVCE (144 aa)) enclose the PH domain. The Btk-type zinc-finger motif lies at 187 to 223 (NTPKSYRYHPGLWSGKKWSCCKGLSRTTFGCRAAAHW). Residues histidine 195, cysteine 206, cysteine 207, and cysteine 217 each coordinate Zn(2+). Over residues 226–240 (ANNNPSNGSSPAQNS) the composition is skewed to low complexity. The disordered stretch occupies residues 226-301 (ANNNPSNGSS…TPTSLQPQSS (76 aa)). A compositionally biased stretch (polar residues) spans 241-260 (TRSISPNSSTTNSQFSLQHN). Residues 264–290 (SLGGGVGGGLGGGGSLGLGGGGGGGGS) are compositionally biased toward gly residues. The segment covering 291 to 301 (CTPTSLQPQSS) has biased composition (polar residues). In terms of domain architecture, SH3 spans 342 to 402 (HFVKLVVALY…PSNYVKPKAL (61 aa)). Residues 410 to 503 (WYVGDMSRQR…GLACRLKSSP (94 aa)) form the SH2 domain. Residues 526-779 (LMLMEELGSG…FRVLMDQLAL (254 aa)) enclose the Protein kinase domain. Residues 532 to 540 (LGSGQFGVV) and lysine 554 each bind ATP. The active-site Proton acceptor is the aspartate 647. At tyrosine 677 the chain carries Phosphotyrosine; by autocatalysis.

This sequence belongs to the protein kinase superfamily. Tyr protein kinase family. TEC subfamily. Requires Zn(2+) as cofactor. Ring canals in the egg chambers and imaginal disks of third-instar larvae.

It catalyses the reaction L-tyrosyl-[protein] + ATP = O-phospho-L-tyrosyl-[protein] + ADP + H(+). Required for proper ring canal development. Also required for the development of male genitalia and for adult survival. The sequence is that of Tyrosine-protein kinase Btk from Drosophila melanogaster (Fruit fly).